The following is a 174-amino-acid chain: Large ribosomal subunit protein uL10 (174 aa).

It belongs to the universal ribosomal protein uL10 family. As to quaternary structure, part of the ribosomal stalk of the 50S ribosomal subunit. The N-terminus interacts with L11 and the large rRNA to form the base of the stalk. The C-terminus forms an elongated spine to which L12 dimers bind in a sequential fashion forming a multimeric L10(L12)X complex.

Forms part of the ribosomal stalk, playing a central role in the interaction of the ribosome with GTP-bound translation factors. The protein is Large ribosomal subunit protein uL10 of Verminephrobacter eiseniae (strain EF01-2).